We begin with the raw amino-acid sequence, 396 residues long: Smad nuclear-interacting protein 1 (396 aa).

The segment covering 1-10 (MKAVKSERER) has biased composition (basic and acidic residues). The tract at residues 1-227 (MKAVKSERER…VPAKEKPSFE (227 aa)) is disordered. Lys-30 is covalently cross-linked (Glycyl lysine isopeptide (Lys-Gly) (interchain with G-Cter in SUMO); alternate). Lys-30 participates in a covalent cross-link: Glycyl lysine isopeptide (Lys-Gly) (interchain with G-Cter in SUMO1); alternate. A Glycyl lysine isopeptide (Lys-Gly) (interchain with G-Cter in SUMO2); alternate cross-link involves residue Lys-30. Ser-35, Ser-49, Ser-52, and Ser-54 each carry phosphoserine. A Phosphothreonine modification is found at Thr-57. 2 positions are modified to phosphoserine: Ser-58 and Ser-99. A compositionally biased stretch (basic residues) spans 77–105 (PPKKKNKASGRRSKSPRSKRNRSPHHSTV). Positions 107 to 142 (VKQEREDHPRRGREDRQHREPSEQEHRRARNSDRDR) are enriched in basic and acidic residues. Lys-108 participates in a covalent cross-link: Glycyl lysine isopeptide (Lys-Gly) (interchain with G-Cter in SUMO2). Phosphoserine is present on Ser-153. Residues 165-196 (RDRDTQNLQAQEEEREFYNARRREHRQRNDVG) adopt a coiled-coil conformation. Ser-202 carries the phosphoserine modification. The span at 213 to 225 (NKEKEVPAKEKPS) shows a compositional bias: basic and acidic residues. A Glycyl lysine isopeptide (Lys-Gly) (interchain with G-Cter in SUMO2) cross-link involves residue Lys-223. The FHA domain occupies 281 to 344 (YLLGRHRRIA…NGTFLNNKRI (64 aa)). Residues 373-382 (SSDTSEIDRK) are compositionally biased toward basic and acidic residues. Residues 373-396 (SSDTSEIDRKDDEDEEEEEEVSDS) form a disordered region. Over residues 383 to 396 (DDEDEEEEEEVSDS) the composition is skewed to acidic residues. The residue at position 394 (Ser-394) is a Phosphoserine.

Component of activated spliceosome complexes. Component of the minor spliceosome, which splices U12-type introns. Binds SMAD4 and CREBBP/EP300. Binds the SMAD1/OAZ1/PSMB4 complex. Interacts with DROSHA and SMARCA4. Component of the SNARP complex which consists at least of SNIP1, SNW1, THRAP3, BCLAF1 and PNN. Post-translationally, degraded by the proteasome upon binding to the SMAD1/OAZ1/PSMB4 complex. As to expression, ubiquitous, with highest expression in heart and skeletal muscle.

The protein localises to the nucleus. In terms of biological role, required for pre-mRNA splicing as component of the spliceosome. As a component of the minor spliceosome, involved in the splicing of U12-type introns in pre-mRNAs. Down-regulates NF-kappa-B signaling by competing with RELA for CREBBP/EP300 binding. Involved in the microRNA (miRNA) biogenesis. May be involved in cyclin-D1/CCND1 mRNA stability through the SNARP complex which associates with both the 3'end of the CCND1 gene and its mRNA. The chain is Smad nuclear-interacting protein 1 (SNIP1) from Homo sapiens (Human).